A 329-amino-acid chain; its full sequence is Ceramide synthase hyl-2 (329 aa).

Residue Asn22 is glycosylated (N-linked (GlcNAc...) asparagine). 7 consecutive transmembrane segments (helical) span residues 41–61 (VLTG…IFVP), 95–115 (ALYY…ESHL), 134–154 (VAWY…GILF), 162–182 (FWQM…SWTM), 187–207 (VGTL…VGKI), 221–241 (FAGV…FWII), and 270–290 (FIML…YILF). The 213-residue stretch at 86 to 298 (SRMAECAMRA…LFKIAYDTIQ (213 aa)) folds into the TLC domain.

It belongs to the sphingosine N-acyltransferase family. As to expression, strong expression in the gut, the posterior bulb of the pharynx, the hypoderm, and unidentified cells of the head and the tail.

The protein resides in the membrane. The enzyme catalyses a very long-chain fatty acyl-CoA + a sphingoid base = an N-(very-long-chain fatty acyl)-sphingoid base + CoA + H(+). The catalysed reaction is a fatty acyl-CoA + sphinganine = an N-acylsphinganine + CoA + H(+). It carries out the reaction docosanoyl-CoA + sphinganine = N-docosanoylsphinganine + CoA + H(+). It catalyses the reaction sphinganine + tetradecanoyl-CoA = N-(tetradecanoyl)-sphinganine + CoA + H(+). The enzyme catalyses eicosanoyl-CoA + sphinganine = N-eicosanoylsphinganine + CoA + H(+). The catalysed reaction is 15-methylhexadecasphinganine + a fatty acyl-CoA = an N-acyl-15-methylhexadecasphinganine + CoA + H(+). It functions in the pathway lipid metabolism; sphingolipid metabolism. In terms of biological role, catalyzes the acylation of sphingoid bases to form ceramides, which are key players in cell signaling events such as tolerances to heat, oxidation, and ultraviolet stress. C.elegans contain specific sphingoid bases, which are unique or different in structure compared to the sphingoid bases found in other animals. Two examples of these distinctive compounds are: 15-methylhexadecasphinganine and 15-methylhexadecasphing-4-enine. Exhibits substrate preference for long and very long fatty acyl-coA chains (C20-23). Required for adaptation of the nematode to anoxia. Anoxia tolerance may require one or more of the ceramide species that are either specifically or preferentially synthesized by HYL-2, and seems to be affected by a pathway that is parallel to that involving daf-2. The sequence is that of Ceramide synthase hyl-2 (hyl-2) from Caenorhabditis elegans.